We begin with the raw amino-acid sequence, 213 residues long: Heat shock protein 30C (213 aa).

Positions 61 to 80 are enriched in basic and acidic residues; sequence SKDTEMRRITDQNRQSRESE. Disordered stretches follow at residues 61 to 93 and 174 to 213; these read SKDT…GKDH and ALPP…QKVD. Residues 76 to 188 enclose the sHSP domain; that stretch reads SRESEGTSPN…PETPIPISMD (113 aa).

Belongs to the small heat shock protein (HSP20) family.

In Xenopus laevis (African clawed frog), this protein is Heat shock protein 30C (hsp30c).